We begin with the raw amino-acid sequence, 528 residues long: GMP synthase [glutamine-hydrolyzing] (528 aa).

In terms of domain architecture, Glutamine amidotransferase type-1 spans 3 to 199 (KVAIIDFGSQ…FLDIAGCQKD (197 aa)). Catalysis depends on Cys83, which acts as the Nucleophile. Catalysis depends on residues His174 and Glu176. A GMPS ATP-PPase domain is found at 200–394 (WTVTSFIDDQ…LGISTEILMR (195 aa)). Position 227 to 233 (227 to 233 (SGGVDSS)) interacts with ATP.

As to quaternary structure, homodimer.

It carries out the reaction XMP + L-glutamine + ATP + H2O = GMP + L-glutamate + AMP + diphosphate + 2 H(+). It participates in purine metabolism; GMP biosynthesis; GMP from XMP (L-Gln route): step 1/1. In terms of biological role, catalyzes the synthesis of GMP from XMP. The sequence is that of GMP synthase [glutamine-hydrolyzing] from Ehrlichia ruminantium (strain Gardel).